The primary structure comprises 251 residues: Imidazole glycerol phosphate synthase subunit HisF (251 aa).

Residues Asp11 and Asp130 contribute to the active site.

Belongs to the HisA/HisF family. In terms of assembly, heterodimer of HisH and HisF.

Its subcellular location is the cytoplasm. The catalysed reaction is 5-[(5-phospho-1-deoxy-D-ribulos-1-ylimino)methylamino]-1-(5-phospho-beta-D-ribosyl)imidazole-4-carboxamide + L-glutamine = D-erythro-1-(imidazol-4-yl)glycerol 3-phosphate + 5-amino-1-(5-phospho-beta-D-ribosyl)imidazole-4-carboxamide + L-glutamate + H(+). The protein operates within amino-acid biosynthesis; L-histidine biosynthesis; L-histidine from 5-phospho-alpha-D-ribose 1-diphosphate: step 5/9. Functionally, IGPS catalyzes the conversion of PRFAR and glutamine to IGP, AICAR and glutamate. The HisF subunit catalyzes the cyclization activity that produces IGP and AICAR from PRFAR using the ammonia provided by the HisH subunit. The protein is Imidazole glycerol phosphate synthase subunit HisF of Phocaeicola vulgatus (strain ATCC 8482 / DSM 1447 / JCM 5826 / CCUG 4940 / NBRC 14291 / NCTC 11154) (Bacteroides vulgatus).